Here is a 302-residue protein sequence, read N- to C-terminus: MISASLQQRKTRTRRSMLFVPGANAAMVSNSFIYPADALMFDLEDSVALREKDTARRMVYHALQHPLYRDIETIVRVNALDSEWGVNDLEAVVRGGADVVRLPKTDTAQDVLDIEKEILRIEKACGREPGSTGLLAAIESPLGITRAVEIAHASERLIGIALGAEDYVRNLRTERSPEGTELLFARCSILQAARSAGIQAFDTVYSDANNEAGFLQEAAHIKQLGFDGKSLINPRQIDLLHNLYAPTQKEVDHARRVVEAAEAAAREGLGVVSLNGKMVDGPVIDRARLVLSRAELSGIREE.

Residues Arg-76 and Glu-139 each coordinate substrate. Residues Glu-139 and Asp-166 each coordinate Mg(2+).

This sequence belongs to the HpcH/HpaI aldolase family. Citrate lyase beta subunit subfamily. Oligomer with a subunit composition of (alpha,beta,gamma)6. It depends on Mg(2+) as a cofactor.

Its subcellular location is the cytoplasm. It catalyses the reaction citrate = oxaloacetate + acetate. It carries out the reaction (3S)-citryl-CoA = oxaloacetate + acetyl-CoA. In terms of biological role, represents a citryl-ACP lyase. The sequence is that of Citrate lyase subunit beta (citE) from Escherichia coli O6:H1 (strain CFT073 / ATCC 700928 / UPEC).